The following is a 161-amino-acid chain: Ribonuclease P protein component (161 aa).

Residues 1-20 (MPDELRAEKSFPSKPYDSLK) form a disordered region.

The protein belongs to the RnpA family. Consists of a catalytic RNA component (M1 or rnpB) and a protein subunit.

The catalysed reaction is Endonucleolytic cleavage of RNA, removing 5'-extranucleotides from tRNA precursor.. Its function is as follows. RNaseP catalyzes the removal of the 5'-leader sequence from pre-tRNA to produce the mature 5'-terminus. It can also cleave other RNA substrates such as 4.5S RNA. The protein component plays an auxiliary but essential role in vivo by binding to the 5'-leader sequence and broadening the substrate specificity of the ribozyme. In Helicobacter pylori (strain P12), this protein is Ribonuclease P protein component.